Consider the following 219-residue polypeptide: Mediator of RNA polymerase II transcription subunit 21 (219 aa).

A coiled-coil region spans residues 86–125; that stretch reads SAEEQLHKIDSLQKKLVDIEDEKIHAIKKKDDLLKQVDDL. A disordered region spans residues 141–219; that stretch reads SLAPENVQED…ISESISPGKI (79 aa). 2 stretches are compositionally biased toward basic and acidic residues: residues 166–181 and 191–204; these read IEQK…KIEG and SDSK…FMDK. Residues 210-219 show a composition bias toward polar residues; sequence ISESISPGKI.

This sequence belongs to the Mediator complex subunit 21 family. Component of the Mediator complex.

The protein resides in the nucleus. In terms of biological role, component of the Mediator complex, a coactivator involved in the regulated transcription of nearly all RNA polymerase II-dependent genes. Mediator functions as a bridge to convey information from gene-specific regulatory proteins to the basal RNA polymerase II transcription machinery. Mediator is recruited to promoters by direct interactions with regulatory proteins and serves as a scaffold for the assembly of a functional preinitiation complex with RNA polymerase II and the general transcription factors. This Candida glabrata (strain ATCC 2001 / BCRC 20586 / JCM 3761 / NBRC 0622 / NRRL Y-65 / CBS 138) (Yeast) protein is Mediator of RNA polymerase II transcription subunit 21 (SRB7).